Reading from the N-terminus, the 146-residue chain is Deoxyuridine 5'-triphosphate nucleotidohydrolase (146 aa).

Substrate is bound by residues 66 to 68 (RSG), Asn-79, 83 to 85 (TID), and Lys-93.

The protein belongs to the dUTPase family. Mg(2+) is required as a cofactor.

The enzyme catalyses dUTP + H2O = dUMP + diphosphate + H(+). The protein operates within pyrimidine metabolism; dUMP biosynthesis; dUMP from dCTP (dUTP route): step 2/2. In terms of biological role, this enzyme is involved in nucleotide metabolism: it produces dUMP, the immediate precursor of thymidine nucleotides and it decreases the intracellular concentration of dUTP so that uracil cannot be incorporated into DNA. The sequence is that of Deoxyuridine 5'-triphosphate nucleotidohydrolase from Zymomonas mobilis subsp. mobilis (strain ATCC 31821 / ZM4 / CP4).